The sequence spans 488 residues: MAEATDVVLVGGGIMSATLGVLLKELEPSWEITLIERLEDVALESSNAWNNAGTGHSALCELNYAPLGADGVINPARALNIAEQFHVSRQFWATLVAEGKLEDNSFINAVPHMSLVMNEDHCRYLQKRYDVFKTQKLFENMEFSTDRNKISDWAPLIMRGRDENQPVAANYSAEGTDVDFGRLTRQMVKYLQGKGVKTEFNRHVEDIKRESDGAWVLKTADTRNPDWQLTLRTRFLFLGAGGGALTLLQKSGIPEGKGYGGLPVSGLFFRNSNPETAEQHNAKVYGQASVGAPPMSVPHLDTRNVDGKRHLMFGPYAGFRSNFLKQGSFMDLPLSIHMDNLYPMLRAGWANMPLTKYLLGELRKTKEERFASLLEYYPEANPDDWELITAGQRVQIIKKDSEKGGVLQFGTEIVAHADGSLAALLGASPGASTAVPLMIRLMHQCFPERAPSWEGRLKELVPGYGIKLNENPERADEIIAYTAKVLDI.

It belongs to the MQO family. It depends on FAD as a cofactor.

It carries out the reaction (S)-malate + a quinone = a quinol + oxaloacetate. The protein operates within carbohydrate metabolism; tricarboxylic acid cycle; oxaloacetate from (S)-malate (quinone route): step 1/1. The polypeptide is Probable malate:quinone oxidoreductase (Neisseria gonorrhoeae (strain ATCC 700825 / FA 1090)).